A 73-amino-acid polypeptide reads, in one-letter code: Waprin-Phi2 (73 aa).

The first 21 residues, 1–21 (MKATLLLLLLFAVILPGTISA), serve as a signal peptide directing secretion. The 51-residue stretch at 22–72 (EQEKPGSCPNVDMPIPPLGLCKTTCSKDSDCSETKKCCKNGCGFMTCTTAR) folds into the WAP domain. 4 cysteine pairs are disulfide-bonded: C29–C59, C42–C63, C46–C58, and C52–C68.

This sequence belongs to the venom waprin family. As to expression, expressed by the venom gland.

It is found in the secreted. Its function is as follows. Damages membranes of susceptible bacteria. Has no hemolytic activity. Not toxic to mice. Does not inhibit the proteinases elastase and cathepsin G. The polypeptide is Waprin-Phi2 (Philodryas olfersii (Green snake)).